Reading from the N-terminus, the 152-residue chain is Cyanate hydratase (152 aa).

Active-site residues include Arg98, Glu101, and Ser124.

It belongs to the cyanase family.

It catalyses the reaction cyanate + hydrogencarbonate + 3 H(+) = NH4(+) + 2 CO2. Functionally, catalyzes the reaction of cyanate with bicarbonate to produce ammonia and carbon dioxide. The chain is Cyanate hydratase from Uncinocarpus reesii (strain UAMH 1704).